A 199-amino-acid polypeptide reads, in one-letter code: dITP/XTP pyrophosphatase (199 aa).

7–12 (TGNAGK) is a binding site for substrate. Catalysis depends on Asp68, which acts as the Proton acceptor. Mg(2+) is bound at residue Asp68. Residues Ser69, 153-156 (FGYD), Lys176, and 181-182 (HR) contribute to the substrate site.

This sequence belongs to the HAM1 NTPase family. In terms of assembly, homodimer. Requires Mg(2+) as cofactor.

The catalysed reaction is XTP + H2O = XMP + diphosphate + H(+). It catalyses the reaction dITP + H2O = dIMP + diphosphate + H(+). The enzyme catalyses ITP + H2O = IMP + diphosphate + H(+). Pyrophosphatase that catalyzes the hydrolysis of nucleoside triphosphates to their monophosphate derivatives, with a high preference for the non-canonical purine nucleotides XTP (xanthosine triphosphate), dITP (deoxyinosine triphosphate) and ITP. Seems to function as a house-cleaning enzyme that removes non-canonical purine nucleotides from the nucleotide pool, thus preventing their incorporation into DNA/RNA and avoiding chromosomal lesions. This Halorhodospira halophila (strain DSM 244 / SL1) (Ectothiorhodospira halophila (strain DSM 244 / SL1)) protein is dITP/XTP pyrophosphatase.